A 687-amino-acid polypeptide reads, in one-letter code: Ribonuclease E (687 aa).

The S1 motif domain maps to 35 to 117 (GDIYLGVVEN…LTGNITLPGR (83 aa)). Residues Asp-296 and Asp-339 each contribute to the Mg(2+) site. 2 residues coordinate Zn(2+): Cys-397 and Cys-400. Positions 650-687 (PIKLTETMEESEVNAASTANRRRRRRSSASDSDTGEDS) are disordered. Residues 670–678 (RRRRRRSSA) carry the C4 Arg-rich motif, necessary and sufficient to confer PNPase binding on another protein motif.

Belongs to the RNase E/G family. As to quaternary structure, may form homodimers or higher order multimers. Interacts with polynucleotide phosphorylase (PNPase, pnp) via the C4 Arg-rich motif (residues 670-678). A homotetramer formed by a dimer of dimers. Mg(2+) serves as cofactor. Zn(2+) is required as a cofactor.

Its subcellular location is the cytoplasm. The enzyme catalyses Endonucleolytic cleavage of single-stranded RNA in A- and U-rich regions.. Endoribonuclease that plays a central role in rRNA and tRNA processing and mRNA decay. Has been shown to act on 9S rRNA (the precursor of 5S rRNA). This Nostoc sp. (strain PCC 7120 / SAG 25.82 / UTEX 2576) protein is Ribonuclease E.